Here is a 610-residue protein sequence, read N- to C-terminus: Probable pleckstrin homology domain-containing family N member 1 (610 aa).

Residues 1-30 (MGNSHCVPQAPRRLRASFSRKPSLKGNRED) are disordered. Gly-2 carries N-myristoyl glycine lipidation. Residues 61-100 (TDIPGPEHHPENLEQPFLSVFKKGWRRTPVRNLGKVVHYS) form an interaction with C1QBP region. 2 consecutive PH domains span residues 96-192 (VVHY…MALL) and 227-324 (AICA…SRRD). Tyr-307 is subject to Phosphotyrosine. Disordered stretches follow at residues 327 to 357 (HLPPGPESFPGLQKPTQLVGRGRGSLSSNGR), 371 to 431 (QSLP…PLPL), 443 to 473 (LDSGPEAQDHSLDIPHSPLYADPYTPPATSR), and 493 to 610 (PGPD…IQWI). 2 stretches are compositionally biased toward polar residues: residues 371–380 (QSLPESSVPT) and 391–402 (NQTDSNCVSTGQ). Phosphotyrosine is present on Tyr-462. Positions 504–526 (VSVSVPVSESSSGISSSPGPLGS) are enriched in low complexity.

As to quaternary structure, found in a complex with cytochrome c mRNA and various ribosomal proteins. Interacts with C1QBP, ELAVL1 and BID. In terms of processing, phosphorylation is essential for its mitochondrial localization and regulates its interaction with C1QBP. In terms of tissue distribution, testis and adipose tissue (at protein level). Ubiquitous.

The protein localises to the cell membrane. It is found in the mitochondrion membrane. Its subcellular location is the mitochondrion. Its function is as follows. Controls the stability of the leptin mRNA harboring an AU-rich element (ARE) in its 3' UTR, in cooperation with the RNA stabilizer ELAVL1. Decreases the stability of the leptin mRNA by antagonizing the function of ELAVL1 by inducing its atypical recruitment from the nucleus to the cytosol. Binds to cardiolipin (CL), phosphatidic acid (PA), phosphatidylinositol 4-phosphate (PtdIns(4)P) and phosphatidylserine (PS). The protein is Probable pleckstrin homology domain-containing family N member 1 (Plekhn1) of Mus musculus (Mouse).